A 453-amino-acid polypeptide reads, in one-letter code: Homogentisate 1,2-dioxygenase (453 aa).

H306 serves as the catalytic Proton acceptor. Fe cation-binding residues include H349 and E355. Residues Y364 and H385 each contribute to the homogentisate site. Position 385 (H385) interacts with Fe cation.

It belongs to the homogentisate dioxygenase family. In terms of assembly, hexamer; dimer of trimers. It depends on Fe cation as a cofactor.

It catalyses the reaction homogentisate + O2 = 4-maleylacetoacetate + H(+). It participates in amino-acid degradation; L-phenylalanine degradation; acetoacetate and fumarate from L-phenylalanine: step 4/6. Functionally, involved in the catabolism of homogentisate (2,5-dihydroxyphenylacetate or 2,5-OH-PhAc), a central intermediate in the degradation of phenylalanine and tyrosine. Catalyzes the oxidative ring cleavage of the aromatic ring of homogentisate to yield maleylacetoacetate. This chain is Homogentisate 1,2-dioxygenase, found in Rhizobium rhizogenes (strain K84 / ATCC BAA-868) (Agrobacterium radiobacter).